Consider the following 507-residue polypeptide: Steroid 17-alpha-hydroxylase/17,20 lyase (507 aa).

Cys441 lines the heme pocket.

The protein belongs to the cytochrome P450 family. Heme serves as cofactor.

Its subcellular location is the endoplasmic reticulum membrane. The protein localises to the microsome membrane. It catalyses the reaction a C21-steroid + reduced [NADPH--hemoprotein reductase] + O2 = a 17alpha-hydroxy-C21-steroid + oxidized [NADPH--hemoprotein reductase] + H2O + H(+). It carries out the reaction progesterone + reduced [NADPH--hemoprotein reductase] + O2 = 17alpha-hydroxyprogesterone + oxidized [NADPH--hemoprotein reductase] + H2O + H(+). The enzyme catalyses pregnenolone + reduced [NADPH--hemoprotein reductase] + O2 = 17alpha-hydroxypregnenolone + oxidized [NADPH--hemoprotein reductase] + H2O + H(+). The catalysed reaction is 17alpha-hydroxyprogesterone + reduced [NADPH--hemoprotein reductase] + O2 = androst-4-ene-3,17-dione + acetate + oxidized [NADPH--hemoprotein reductase] + H2O + 2 H(+). It catalyses the reaction 17alpha-hydroxyprogesterone + reduced [NADPH--hemoprotein reductase] + O2 = 16alpha,17alpha-dihydroxyprogesterone + oxidized [NADPH--hemoprotein reductase] + H2O + H(+). It carries out the reaction 16alpha,17alpha-dihydroxyprogesterone + reduced [NADPH--hemoprotein reductase] + O2 = 6beta,16alpha,17alpha-trihydroxyprogesterone + oxidized [NADPH--hemoprotein reductase] + H2O + H(+). The enzyme catalyses 17alpha-hydroxypregnenolone + reduced [NADPH--hemoprotein reductase] + O2 = 3beta-hydroxyandrost-5-en-17-one + acetate + oxidized [NADPH--hemoprotein reductase] + H2O + 2 H(+). The catalysed reaction is 16alpha,17alpha-dihydroxypregnenolone + reduced [NADPH--hemoprotein reductase] + O2 = 3beta,16alpha-dihydroxy-androst-5-en-17-one + acetate + oxidized [NADPH--hemoprotein reductase] + H2O + 2 H(+). It catalyses the reaction 3beta-hydroxyandrost-5-en-17-one + reduced [NADPH--hemoprotein reductase] + O2 = 3beta,16alpha-dihydroxy-androst-5-en-17-one + oxidized [NADPH--hemoprotein reductase] + H2O + H(+). It carries out the reaction androst-4-ene-3,17-dione + reduced [NADPH--hemoprotein reductase] + O2 = 16alpha-hydroxyandrost-4-ene-3,17-dione + oxidized [NADPH--hemoprotein reductase] + H2O + H(+). It functions in the pathway steroid hormone biosynthesis. It participates in steroid biosynthesis; glucocorticoid biosynthesis. With respect to regulation, regulated predominantly by intracellular cAMP levels. The 17,20-lyase activity is stimulated by cytochrome b5, which acts as an allosteric effector increasing the Vmax of the lyase activity. In terms of biological role, a cytochrome P450 monooxygenase involved in corticoid and androgen biosynthesis. Catalyzes 17-alpha hydroxylation of C21 steroids, which is common for both pathways. A second oxidative step, required only for androgen synthesis, involves an acyl-carbon cleavage. The 17-alpha hydroxy intermediates, as part of adrenal glucocorticoids biosynthesis pathway, are precursors of cortisol. Hydroxylates steroid hormones, pregnenolone and progesterone to form 17-alpha hydroxy metabolites, followed by the cleavage of the C17-C20 bond to form C19 steroids, dehydroepiandrosterone (DHEA) and androstenedione. Has 16-alpha hydroxylase activity. Catalyzes 16-alpha hydroxylation of 17-alpha hydroxy pregnenolone, followed by the cleavage of the C17-C20 bond to form 16-alpha-hydroxy DHEA. Also 16-alpha hydroxylates androgens, relevant for estriol synthesis. Mechanistically, uses molecular oxygen inserting one oxygen atom into a substrate, and reducing the second into a water molecule, with two electrons provided by NADPH via cytochrome P450 reductase (CPR; NADPH-ferrihemoprotein reductase). This chain is Steroid 17-alpha-hydroxylase/17,20 lyase (Cyp17a1), found in Rattus norvegicus (Rat).